The sequence spans 213 residues: Ribosomal RNA large subunit methyltransferase E (213 aa).

S-adenosyl-L-methionine is bound by residues G60, W62, D80, D96, and D121. K161 functions as the Proton acceptor in the catalytic mechanism.

The protein belongs to the class I-like SAM-binding methyltransferase superfamily. RNA methyltransferase RlmE family.

The protein localises to the cytoplasm. The enzyme catalyses uridine(2552) in 23S rRNA + S-adenosyl-L-methionine = 2'-O-methyluridine(2552) in 23S rRNA + S-adenosyl-L-homocysteine + H(+). Functionally, specifically methylates the uridine in position 2552 of 23S rRNA at the 2'-O position of the ribose in the fully assembled 50S ribosomal subunit. This chain is Ribosomal RNA large subunit methyltransferase E, found in Xylella fastidiosa (strain M23).